The sequence spans 476 residues: Sulfate adenylyltransferase subunit 1 (476 aa).

The tr-type G domain maps to 24–239; sequence KSLLRFLTCG…LLETVDVDYE (216 aa). The tract at residues 33–40 is G1; that stretch reads GSVDDGKS. Position 33-40 (33-40) interacts with GTP; it reads GSVDDGKS. A G2 region spans residues 91 to 95; that stretch reads GITID. Positions 112 to 115 are G3; sequence DTPG. GTP contacts are provided by residues 112–116 and 167–170; these read DTPGH and NKMD. The interval 167–170 is G4; the sequence is NKMD. Residues 205–207 form a G5 region; the sequence is SAL.

The protein belongs to the TRAFAC class translation factor GTPase superfamily. Classic translation factor GTPase family. CysN/NodQ subfamily. As to quaternary structure, heterodimer composed of CysD, the smaller subunit, and CysN.

It catalyses the reaction sulfate + ATP + H(+) = adenosine 5'-phosphosulfate + diphosphate. It functions in the pathway sulfur metabolism; hydrogen sulfide biosynthesis; sulfite from sulfate: step 1/3. Its function is as follows. With CysD forms the ATP sulfurylase (ATPS) that catalyzes the adenylation of sulfate producing adenosine 5'-phosphosulfate (APS) and diphosphate, the first enzymatic step in sulfur assimilation pathway. APS synthesis involves the formation of a high-energy phosphoric-sulfuric acid anhydride bond driven by GTP hydrolysis by CysN coupled to ATP hydrolysis by CysD. The chain is Sulfate adenylyltransferase subunit 1 from Vibrio parahaemolyticus serotype O3:K6 (strain RIMD 2210633).